We begin with the raw amino-acid sequence, 152 residues long: MSPHLTALLGLVLCLAQTIHTQEGALPRPSISAEPGTVISPGSHVTFMCRGPVGVQTFRLEREDRAKYKDSYNVFRLGPSESEARFHIDSVSEGNAGLYRCLYYKPPGWSEHSDFLELLVKESSGGPDSPDTEPGSSAGTVPGTEASGFDAP.

Positions 1 to 21 (MSPHLTALLGLVLCLAQTIHT) are cleaved as a signal peptide. One can recognise an Ig-like C2-type domain in the interval 29 to 117 (PSISAEPGTV…GWSEHSDFLE (89 aa)). An intrachain disulfide couples Cys-49 to Cys-101. Residues 120 to 152 (VKESSGGPDSPDTEPGSSAGTVPGTEASGFDAP) are disordered.

The protein resides in the secreted. This Homo sapiens (Human) protein is Leukocyte-associated immunoglobulin-like receptor 2 (LAIR2).